A 321-amino-acid chain; its full sequence is Beta-ketoacyl-[acyl-carrier-protein] synthase III (321 aa).

Residues Cys-113 and His-246 contribute to the active site. Residues 247 to 251 (QANVR) are ACP-binding. Asn-276 is a catalytic residue.

It belongs to the thiolase-like superfamily. FabH family. Homodimer.

The protein localises to the cytoplasm. It catalyses the reaction malonyl-[ACP] + acetyl-CoA + H(+) = 3-oxobutanoyl-[ACP] + CO2 + CoA. It functions in the pathway lipid metabolism; fatty acid biosynthesis. Its function is as follows. Catalyzes the condensation reaction of fatty acid synthesis by the addition to an acyl acceptor of two carbons from malonyl-ACP. Catalyzes the first condensation reaction which initiates fatty acid synthesis and may therefore play a role in governing the total rate of fatty acid production. Possesses both acetoacetyl-ACP synthase and acetyl transacylase activities. Its substrate specificity determines the biosynthesis of branched-chain and/or straight-chain of fatty acids. This chain is Beta-ketoacyl-[acyl-carrier-protein] synthase III, found in Enterococcus faecalis (strain ATCC 700802 / V583).